A 1392-amino-acid chain; its full sequence is DNA-directed RNA polymerase subunit beta'' (1392 aa).

The Zn(2+) site is built by Cys-224, Cys-295, Cys-302, and Cys-305.

This sequence belongs to the RNA polymerase beta' chain family. RpoC2 subfamily. In terms of assembly, in plastids the minimal PEP RNA polymerase catalytic core is composed of four subunits: alpha, beta, beta', and beta''. When a (nuclear-encoded) sigma factor is associated with the core the holoenzyme is formed, which can initiate transcription. The cofactor is Zn(2+).

Its subcellular location is the plastid. The protein localises to the chloroplast. The catalysed reaction is RNA(n) + a ribonucleoside 5'-triphosphate = RNA(n+1) + diphosphate. In terms of biological role, DNA-dependent RNA polymerase catalyzes the transcription of DNA into RNA using the four ribonucleoside triphosphates as substrates. The chain is DNA-directed RNA polymerase subunit beta'' from Solanum lycopersicum (Tomato).